The following is a 504-amino-acid chain: Xylose import ATP-binding protein XylG (504 aa).

ABC transporter domains follow at residues 5 to 242 (LEMK…VGRE) and 259 to 500 (LRVE…VMEA). 37-44 (GENGSGKS) lines the ATP pocket.

Belongs to the ABC transporter superfamily. Xylose importer (TC 3.A.1.2.4) family. The complex is composed of two ATP-binding proteins (XylG), two transmembrane proteins (XylH) and a solute-binding protein (XylF).

The protein resides in the cell inner membrane. The catalysed reaction is D-xylose(out) + ATP + H2O = D-xylose(in) + ADP + phosphate + H(+). Its function is as follows. Part of the ABC transporter complex XylFGH involved in xylose import. Responsible for energy coupling to the transport system. The protein is Xylose import ATP-binding protein XylG of Histophilus somni (strain 129Pt) (Haemophilus somnus).